The chain runs to 296 residues: MELANTLRQDGESRGGVLAHLERLETQVSKSRKKLEEPQNAQALEARIHELKRLRDKLRAEVKQRQARVKASTANVEPDQILEISEQEILERKQENMKAILQAYRFTGISGKLTSRGVCVCISTAFEGNLLDSYFVDLVMEKPLWIHHHSVPVFIPLEEISAKYLQTNTRHFLFVLWEYLNAYSGRKYQADRLQSDFAAFLVGPLQRNSLCNLLSFTYKVKPEGQSFPFCARLLYKDLTTTLPTDVTVTSQGTEALPSTWEEQRAAHENLFFTKPLHQVFTSFAKKGEKLDMSLVS.

Residues valine 17–arginine 105 are a coiled coil.

This sequence belongs to the CENP-O/MCM21 family. As to quaternary structure, component of the CENPA-CAD complex, composed of CENPI, CENPK, CENPL, CENPO, CENPP, CENPQ, CENPR and CENPS. The CENPA-CAD complex interacts with the CENPA-NAC complex, at least composed of CENPA, CENPC, CENPH, CENPM, CENPN, CENPT and CENPU.

It localises to the nucleus. The protein localises to the chromosome. It is found in the centromere. Its subcellular location is the kinetochore. Its function is as follows. Component of the CENPA-CAD (nucleosome distal) complex, a complex recruited to centromeres which is involved in assembly of kinetochore proteins, mitotic progression and chromosome segregation. May be involved in incorporation of newly synthesized CENPA into centromeres via its interaction with the CENPA-NAC complex. Modulates the kinetochore-bound levels of NDC80 complex. The sequence is that of Centromere protein O (CENPO) from Bos taurus (Bovine).